We begin with the raw amino-acid sequence, 255 residues long: MQLIPLPAFTDNYIWMVHDERHALVVDPGDAQPVLEALQQLGLQLETILVTHHHPDHTGGVAALRAATGAQVFGPAREPMPEPLIRLTGDQQLQALGLNFQVIDVPGHTACHIAYFCADVDGAPLLFCGDTLFSAGCGRLFEGSPAQMLASLDTLAALPDATRVCCAHEYTLSNLKFACAVEPVNQALTDYTVKAEALRSQQQPTLPSSILLERQINPFLRTRQATVTQAVQAFDASARDEVSIFAALRQWKNQF.

Zn(2+)-binding residues include His52, His54, Asp56, His57, His108, Asp130, and His168.

Belongs to the metallo-beta-lactamase superfamily. Glyoxalase II family. In terms of assembly, monomer. Zn(2+) is required as a cofactor.

The enzyme catalyses an S-(2-hydroxyacyl)glutathione + H2O = a 2-hydroxy carboxylate + glutathione + H(+). It participates in secondary metabolite metabolism; methylglyoxal degradation; (R)-lactate from methylglyoxal: step 2/2. Functionally, thiolesterase that catalyzes the hydrolysis of S-D-lactoyl-glutathione to form glutathione and D-lactic acid. The sequence is that of Hydroxyacylglutathione hydrolase from Albidiferax ferrireducens (strain ATCC BAA-621 / DSM 15236 / T118) (Rhodoferax ferrireducens).